Consider the following 256-residue polypeptide: DNA repair protein RecO (256 aa).

The protein belongs to the RecO family.

Its function is as follows. Involved in DNA repair and RecF pathway recombination. This Delftia acidovorans (strain DSM 14801 / SPH-1) protein is DNA repair protein RecO.